We begin with the raw amino-acid sequence, 1070 residues long: DNA-directed RNA polymerase subunit beta (1070 aa).

It belongs to the RNA polymerase beta chain family. In plastids the minimal PEP RNA polymerase catalytic core is composed of four subunits: alpha, beta, beta', and beta''. When a (nuclear-encoded) sigma factor is associated with the core the holoenzyme is formed, which can initiate transcription.

It localises to the plastid. The protein localises to the chloroplast. The catalysed reaction is RNA(n) + a ribonucleoside 5'-triphosphate = RNA(n+1) + diphosphate. Functionally, DNA-dependent RNA polymerase catalyzes the transcription of DNA into RNA using the four ribonucleoside triphosphates as substrates. This chain is DNA-directed RNA polymerase subunit beta, found in Nandina domestica (Heavenly bamboo).